Reading from the N-terminus, the 130-residue chain is Small ribosomal subunit protein uS9 (130 aa).

The segment at 98–130 (LKRAGFLTRDARKKERKKYGQPGARKRFQYSKR) is disordered. The segment covering 111–130 (KERKKYGQPGARKRFQYSKR) has biased composition (basic residues).

Belongs to the universal ribosomal protein uS9 family.

This is Small ribosomal subunit protein uS9 from Sorangium cellulosum (strain So ce56) (Polyangium cellulosum (strain So ce56)).